The following is a 391-amino-acid chain: Inner membrane protein YdcO (391 aa).

The Cytoplasmic segment spans residues 1 to 9 (MRLFSIPPP). The helical transmembrane segment at 10–30 (TLLAGFLAVLIGYASSAAIIW) threads the bilayer. The Periplasmic segment spans residues 31-42 (QAAIVAGATTAQ). Residues 43-63 (ISGWMTALGLAMGVSTLTLTL) traverse the membrane as a helical segment. Residues 64 to 93 (WYRVPVLTAWSTPGAALLVTGLQGLTLNEA) are Cytoplasmic-facing. A helical membrane pass occupies residues 94–114 (IGVFIVTNALIVLCGITGLFA). Topologically, residues 115 to 123 (RLMRIIPHS) are periplasmic. The helical transmembrane segment at 124-144 (LAAAMLAGILLRFGLQAFASL) threads the bilayer. Topologically, residues 145–167 (DGQFTLCGSMLLVWLATKAVAPR) are cytoplasmic. A helical transmembrane segment spans residues 168-188 (YAVIAAMIIGIVIVIAQGDVV). The Periplasmic segment spans residues 189–200 (TTDVVFKPVLPT). A helical membrane pass occupies residues 201-221 (YITPDFSFAHSLSVALPLFLV). Topologically, residues 222–246 (TMASQNAPGIAAMKAAGYSAPVSPL) are cytoplasmic. The helical transmembrane segment at 247–267 (IVFTGLLALVFSPFGVYSVGI) threads the bilayer. Topologically, residues 268 to 287 (AAITAAICQSPEAHPDKDQR) are periplasmic. A helical membrane pass occupies residues 288–308 (WLAAAVAGIFYLLAGLFGSAI). Topologically, residues 309 to 311 (TGM) are cytoplasmic. The helical transmembrane segment at 312-332 (MAALPVSWIQMLAGLALLSTI) threads the bilayer. The Periplasmic portion of the chain corresponds to 333-361 (GGSLYQALHNERERDAAVVAFLVTASGLT). The helical transmembrane segment at 362-382 (LVGIGSAFWGLIAGGVCYVVL) threads the bilayer. Residues 383–391 (NLIADRNRY) lie on the Cytoplasmic side of the membrane.

It is found in the cell inner membrane. The protein is Inner membrane protein YdcO (ydcO) of Escherichia coli (strain K12).